The primary structure comprises 1279 residues: ATP-dependent helicase/nuclease subunit A (1279 aa).

The region spanning 4–499 (TKWTDEQRQA…VKLFKNFRSR (496 aa)) is the UvrD-like helicase ATP-binding domain. An ATP-binding site is contributed by 25-32 (AGAGAGKT). One can recognise a UvrD-like helicase C-terminal domain in the interval 526–853 (EEALKVGASY…RIMSIHKSKG (328 aa)).

This sequence belongs to the helicase family. AddA subfamily. Heterodimer of AddA and AddB/RexB. The cofactor is Mg(2+).

The enzyme catalyses Couples ATP hydrolysis with the unwinding of duplex DNA by translocating in the 3'-5' direction.. It catalyses the reaction ATP + H2O = ADP + phosphate + H(+). Functionally, the heterodimer acts as both an ATP-dependent DNA helicase and an ATP-dependent, dual-direction single-stranded exonuclease. Recognizes the chi site generating a DNA molecule suitable for the initiation of homologous recombination. The AddA nuclease domain is required for chi fragment generation; this subunit has the helicase and 3' -&gt; 5' nuclease activities. This Clostridium botulinum (strain Kyoto / Type A2) protein is ATP-dependent helicase/nuclease subunit A.